The primary structure comprises 136 residues: Nucleoside diphosphate kinase (136 aa).

ATP-binding residues include Lys10, Phe58, Arg86, Thr92, Arg104, and Asn114. The Pros-phosphohistidine intermediate role is filled by His117.

The protein belongs to the NDK family. As to quaternary structure, homotetramer. Mg(2+) is required as a cofactor.

It localises to the cytoplasm. It catalyses the reaction a 2'-deoxyribonucleoside 5'-diphosphate + ATP = a 2'-deoxyribonucleoside 5'-triphosphate + ADP. The catalysed reaction is a ribonucleoside 5'-diphosphate + ATP = a ribonucleoside 5'-triphosphate + ADP. Major role in the synthesis of nucleoside triphosphates other than ATP. The ATP gamma phosphate is transferred to the NDP beta phosphate via a ping-pong mechanism, using a phosphorylated active-site intermediate. This chain is Nucleoside diphosphate kinase, found in Corynebacterium jeikeium (strain K411).